A 150-amino-acid polypeptide reads, in one-letter code: Flagellar assembly factor FliW (150 aa).

The protein belongs to the FliW family. In terms of assembly, interacts with translational regulator CsrA and flagellin(s).

It is found in the cytoplasm. Its function is as follows. Acts as an anti-CsrA protein, binds CsrA and prevents it from repressing translation of its target genes, one of which is flagellin. Binds to flagellin and participates in the assembly of the flagellum. The chain is Flagellar assembly factor FliW from Leptospira interrogans serogroup Icterohaemorrhagiae serovar Lai (strain 56601).